The sequence spans 215 residues: Cytochrome c biogenesis ATP-binding export protein CcmA (215 aa).

One can recognise an ABC transporter domain in the interval Leu-3–Ala-215. Residue Gly-35–Ser-42 coordinates ATP.

The protein belongs to the ABC transporter superfamily. CcmA exporter (TC 3.A.1.107) family. The complex is composed of two ATP-binding proteins (CcmA) and two transmembrane proteins (CcmB).

Its subcellular location is the cell inner membrane. The enzyme catalyses heme b(in) + ATP + H2O = heme b(out) + ADP + phosphate + H(+). Functionally, part of the ABC transporter complex CcmAB involved in the biogenesis of c-type cytochromes; once thought to export heme, this seems not to be the case, but its exact role is uncertain. Responsible for energy coupling to the transport system. The protein is Cytochrome c biogenesis ATP-binding export protein CcmA of Brucella melitensis biotype 1 (strain ATCC 23456 / CCUG 17765 / NCTC 10094 / 16M).